The chain runs to 152 residues: Histone H2B.1 (152 aa).

Positions Met1–Glu23 are enriched in basic and acidic residues. Residues Met1–Lys60 form a disordered region. An N6-acetyllysine mark is found at Lys7 and Lys35. Residue Lys148 forms a Glycyl lysine isopeptide (Lys-Gly) (interchain with G-Cter in ubiquitin) linkage.

Belongs to the histone H2B family. In terms of assembly, the nucleosome is a histone octamer containing two molecules each of H2A, H2B, H3 and H4 assembled in one H3-H4 heterotetramer and two H2A-H2B heterodimers. The octamer wraps approximately 147 bp of DNA. In terms of processing, can be acetylated to form H2BK6ac and H2BK33ac. Monoubiquitinated by BRE1 to form H2BK143ub1 and deubiquitinated by UBP26. Required for heterochromatic histone H3 di- and trimethylation at H3K4me. May give a specific tag for epigenetic transcriptional activation.

It localises to the nucleus. Its subcellular location is the chromosome. Functionally, core component of nucleosome. Nucleosomes wrap and compact DNA into chromatin, limiting DNA accessibility to the cellular machineries which require DNA as a template. Histones thereby play a central role in transcription regulation, DNA repair, DNA replication and chromosomal stability. DNA accessibility is regulated via a complex set of post-translational modifications of histones, also called histone code, and nucleosome remodeling. This is Histone H2B.1 from Oryza sativa subsp. indica (Rice).